We begin with the raw amino-acid sequence, 308 residues long: Putative transposon Ty5-1 protein YCL074W (308 aa).

This is Putative transposon Ty5-1 protein YCL074W (TY5A) from Saccharomyces cerevisiae (strain ATCC 204508 / S288c) (Baker's yeast).